Reading from the N-terminus, the 704-residue chain is MPVPIIETCRKRKRKPKVYNLQRFGEDGFPIQRNGAFRDQIRVFLRDCAEIEDYDIRGMTVWCTLLSHETKSSLIPLYIVEENVKHSSEPYCDHCRCTGWSNHFVSKRKYHFIIPIDTEWSLPLEDDAFDSQSHVLHGLIHCNGFGHLVCVNGMESGSKYLCGREIVDFWDRLCNSLGARMITVEDLAKKRSVELRLLYGVAYGHSWFGRWGYKFCCGSFGVTKNEYENAIEALGSLEIDQIEFDFGELRQSKEINQVFRYYREMSEGHLKTFRDLLRFMLIIKSHASPQKLLPVTPPLLTDSPHQKRSSRLLLKKSDVADNDKSPKYRNYSTVAANLGSRWPVRRLIFAAEVIVESLKEMKALKQNGMTRQDVRDSARLHIGDTGLLDYVLKSMNNVVVGDVLVRRYVDPITRILHYTIQDLDDAVKAKEPKKKEAVVLEEITPLRILTPLKPGADVYGDLLLLYTNVLLNYPESELVRSATQAILDSKHFIKEWPIWDNNDTVLQFLCRINPSLVDVRSEQTTELPPGELVTVPLQATVYDLKQAIEETFRDTYCILSNFVVTEIDEVEEDMSLIGSCSALTVRGHGIDLESKLKCQGGCDTWMVKCICRARDDDGERMISCDVCEVWQHTRCCGIDDSDTLPPLFVCSNCCEEFAEQQRKVLQPKYEFPSSENVFLLESADDFFGDQRCLGMIFPEENYLL.

The PHD-type zinc finger occupies M606–E656. 8 residues coordinate Zn(2+): C609, C611, C624, C627, H632, C635, C650, and C653.

Interacts with JMJ16 in the nucleus of male meiocytes, especially on pachytene chromosomes. In terms of tissue distribution, expressed in inflorescence, specifically in male meiocytes.

It localises to the nucleus. Functionally, probable transcription factor required for chromosome organization and progression during male meiosis (e.g. microsporogenesis). Necessary for fertility and meiotic progressive compaction of prophase I chromosomes to metaphase I bivalents. Together with JMJ16, promotes gene expression in male meiocytes in an H3K9me3-dependent manner, and contributes to meiotic chromosome condensation by triggering some condensin promoters (e.g. CAP-D3 and CAP-H). In Arabidopsis thaliana (Mouse-ear cress), this protein is PHD finger protein MALE MEIOCYTE DEATH 1.